The sequence spans 396 residues: Elongation factor Tu (396 aa).

The region spanning 10–206 (KPHVNVGTIG…AMDEYIPTPE (197 aa)) is the tr-type G domain. The interval 19–26 (GHVDHGKT) is G1. GTP is bound at residue 19–26 (GHVDHGKT). Thr-26 provides a ligand contact to Mg(2+). The G2 stretch occupies residues 60-64 (GITIA). Residues 81–84 (DCPG) form a G3 region. GTP is bound by residues 81–85 (DCPGH) and 136–139 (NKAD). Residues 136-139 (NKAD) are G4. The segment at 174–176 (SAL) is G5.

The protein belongs to the TRAFAC class translation factor GTPase superfamily. Classic translation factor GTPase family. EF-Tu/EF-1A subfamily. In terms of assembly, monomer.

It localises to the cytoplasm. The catalysed reaction is GTP + H2O = GDP + phosphate + H(+). Functionally, GTP hydrolase that promotes the GTP-dependent binding of aminoacyl-tRNA to the A-site of ribosomes during protein biosynthesis. The polypeptide is Elongation factor Tu (Alkalilimnicola ehrlichii (strain ATCC BAA-1101 / DSM 17681 / MLHE-1)).